Reading from the N-terminus, the 499-residue chain is Serine/threonine protein phosphatase 2A 57 kDa regulatory subunit B' beta isoform (499 aa).

Basic residues predominate over residues 1–13 (MFKKIMKGGHRKP). The interval 1–65 (MFKKIMKGGH…PVTATPPPPP (65 aa)) is disordered.

It belongs to the phosphatase 2A regulatory subunit B56 family. As to quaternary structure, PP2A consists of a common heteromeric enzyme, composed of a catalytic subunit (subunits C), a constant regulatory subunit (subunit A), and a variety of regulatory subunits such as subunits B (the R2/B/PR55/B55, R3/B''/PR72/PR130/PR59 and R5/B'/B56 families). Interacts with BZR1. Interacts with BRI1. Interacts with SRK2E/OST1. Expressed ubiquitously, higher levels in cotyledons and flowers.

The protein resides in the nucleus. Its subcellular location is the cytoplasm. Its function is as follows. The B regulatory subunit may modulate substrate selectivity and catalytic activity, and may also direct the localization of the catalytic enzyme to a particular subcellular compartment. Required for the formation of the PP2A holoenzyme that positively regulates brassinosteroid signaling by dephosphorylating and activating BZR1. This chain is Serine/threonine protein phosphatase 2A 57 kDa regulatory subunit B' beta isoform (B'BETA), found in Arabidopsis thaliana (Mouse-ear cress).